Here is a 362-residue protein sequence, read N- to C-terminus: Nuclear hormone receptor family member nhr-77 (362 aa).

The nuclear receptor DNA-binding region spans 8–82; it reads DPICPVCEFP…AGMKRNLVKQ (75 aa). 2 NR C4-type zinc fingers span residues 11–32 and 48–69; these read CPVC…CGAC and CEKN…FDYC. In terms of domain architecture, NR LBD spans 145-362; that stretch reads EAEKDVSKIL…KLYIQLGLPF (218 aa).

It belongs to the nuclear hormone receptor family.

It localises to the nucleus. In terms of biological role, orphan nuclear receptor. The chain is Nuclear hormone receptor family member nhr-77 (nhr-77) from Caenorhabditis elegans.